The primary structure comprises 240 residues: MRSGVIAQKVGMTRVFTETGEHIPVTVLKLGNCQVLGHRTSEKNGYTALQLGSGSRKTVYMPKAERGQFAAAKVEPKRKVAEFRVSEDSMIPIGAEIQADHFVVGQFVDVTGTSVGKGFAGGIKRWNFGGLRATHGVSVSHRSIGSTGGRQDPGKTFKNKKMPGHMGVDRITTLNLRVVQLDVERGLILVEGAVPGSKGGWIAVRDAVKKALPADAPKPGKFRLADGGEQAAPAAEQEGV.

Disordered stretches follow at residues 139-164 (VSHRSIGSTGGRQDPGKTFKNKKMPG) and 215-240 (DAPKPGKFRLADGGEQAAPAAEQEGV). The residue at position 151 (glutamine 151) is an N5-methylglutamine. A compositionally biased stretch (low complexity) spans 225-240 (ADGGEQAAPAAEQEGV).

Belongs to the universal ribosomal protein uL3 family. As to quaternary structure, part of the 50S ribosomal subunit. Forms a cluster with proteins L14 and L19. Post-translationally, methylated by PrmB.

Functionally, one of the primary rRNA binding proteins, it binds directly near the 3'-end of the 23S rRNA, where it nucleates assembly of the 50S subunit. In Rhodopseudomonas palustris (strain BisA53), this protein is Large ribosomal subunit protein uL3.